A 290-amino-acid polypeptide reads, in one-letter code: Agmatinase (290 aa).

His112, Asp135, His137, Asp139, Asp216, and Asp218 together coordinate Mn(2+).

Belongs to the arginase family. Agmatinase subfamily. It depends on Mn(2+) as a cofactor.

It catalyses the reaction agmatine + H2O = urea + putrescine. It participates in amine and polyamine biosynthesis; putrescine biosynthesis via agmatine pathway; putrescine from agmatine: step 1/1. Its function is as follows. Catalyzes the formation of putrescine from agmatine. This Bacillus subtilis (strain 168) protein is Agmatinase (speB).